We begin with the raw amino-acid sequence, 932 residues long: Phosphoenolpyruvate carboxylase (932 aa).

Residues histidine 164 and lysine 594 contribute to the active site.

Belongs to the PEPCase type 1 family. Mg(2+) serves as cofactor.

It carries out the reaction oxaloacetate + phosphate = phosphoenolpyruvate + hydrogencarbonate. Forms oxaloacetate, a four-carbon dicarboxylic acid source for the tricarboxylic acid cycle. This Bradyrhizobium diazoefficiens (strain JCM 10833 / BCRC 13528 / IAM 13628 / NBRC 14792 / USDA 110) protein is Phosphoenolpyruvate carboxylase.